A 59-amino-acid chain; its full sequence is Ribosome biogenesis protein Nop10 (59 aa).

This sequence belongs to the NOP10 family.

Its function is as follows. Involved in ribosome biogenesis; more specifically in 18S rRNA pseudouridylation and in cleavage of pre-rRNA. The chain is Ribosome biogenesis protein Nop10 from Thermococcus sibiricus (strain DSM 12597 / MM 739).